Reading from the N-terminus, the 159-residue chain is uncharacterized protein (159 aa).

3 helical membrane-spanning segments follow: residues 16–36 (IVLP…AFIF), 84–104 (VYAG…LLII), and 112–132 (VFFY…LLPV).

It is found in the cell membrane. This is an uncharacterized protein from Bacillus subtilis (strain 168).